The chain runs to 91 residues: MGRSLKKGPFIADSLLRKVEKQNAADDKSVIKTWSRASTILPMMIGHTIAVHNGKTHVPVFVTEQMVGHKLGEFAPTRTFKGHIKDKKGGR.

This sequence belongs to the universal ribosomal protein uS19 family.

Protein S19 forms a complex with S13 that binds strongly to the 16S ribosomal RNA. The protein is Small ribosomal subunit protein uS19 of Synechococcus sp. (strain WH7803).